The primary structure comprises 3127 residues: Probable polyketide synthase 33 (3127 aa).

A Ketosynthase family 3 (KS3) domain is found at Ser-24–Glu-457. Catalysis depends on for beta-ketoacyl synthase activity residues Cys-196, His-335, and His-380. An acyl/malonyl transferase region spans residues Gly-660–Tyr-693. Ser-670 (for acyl/malonyl transferase activity) is an active-site residue. The N-terminal hotdog fold stretch occupies residues Gly-958–Ile-1080. The PKS/mFAS DH domain maps to Gly-958–Ser-1257. His-992 functions as the Proton acceptor; for dehydratase activity in the catalytic mechanism. Residues Asn-1096 to Ser-1257 form a C-terminal hotdog fold region. Residue Asp-1168 is the Proton donor; for dehydratase activity of the active site. The tract at residues Ser-1369–Tyr-1394 is disordered. The span at Asn-1370–Tyr-1394 shows a compositional bias: low complexity. Residues Ser-2539–His-2616 enclose the Carrier domain. Ser-2576 bears the O-(pantetheine 4'-phosphoryl)serine mark. Positions Asn-2617 to Asn-2659 are disordered. Residues Asn-2617–Phe-2671 adopt a coiled-coil conformation. A helical membrane pass occupies residues Val-2937 to Phe-2957.

The cofactor is pantetheine 4'-phosphate.

It is found in the membrane. Its function is as follows. Probable polyketide synthase. This is Probable polyketide synthase 33 (pks33) from Dictyostelium discoideum (Social amoeba).